The following is a 468-amino-acid chain: UDP-N-acetylmuramate--L-alanine ligase (468 aa).

Position 114 to 120 (114 to 120) interacts with ATP; it reads GTHGKTT.

The protein belongs to the MurCDEF family.

The protein localises to the cytoplasm. It carries out the reaction UDP-N-acetyl-alpha-D-muramate + L-alanine + ATP = UDP-N-acetyl-alpha-D-muramoyl-L-alanine + ADP + phosphate + H(+). The protein operates within cell wall biogenesis; peptidoglycan biosynthesis. In terms of biological role, cell wall formation. The sequence is that of UDP-N-acetylmuramate--L-alanine ligase from Methylorubrum extorquens (strain PA1) (Methylobacterium extorquens).